A 395-amino-acid chain; its full sequence is MALHLLLLFGACWVQVASPDSLQRTTMLPSTPHITAPSTSEAQNASPSVSVGSGTVDSKETISPWGQTTIPVSLTPLETTELSSLETSAGASMSTPVPEPTASQEVSSKTSALLPEPSNVASDPPVTAANPVTDGPAANPVTDGTAASTSISKGTSAPPTTVTTSSNETSGPSVATTVSSKTSGPPVTTATGSLGPSSEMHGLPATTATSSVESSSVARGTSVSSRKTSTTSTQDPITTRSPSQESSGMLLVPMLIALVVVLALVALLLLWRQRQKRRTGALTLSGGGKRNGVVDAWAGPARVPDEEATTTSGAGGNKGSEVLETEGSGQRPTLTTFFSRRKSRQGSLVLEELKPGSGPNLKGEEEPLVGSEDEAVETPTSDGPQAKDEAAPQSL.

A signal peptide spans 1 to 19 (MALHLLLLFGACWVQVASP). The Extracellular portion of the chain corresponds to 20 to 248 (DSLQRTTMLP…TRSPSQESSG (229 aa)). A compositionally biased stretch (polar residues) spans 27 to 56 (MLPSTPHITAPSTSEAQNASPSVSVGSGTV). Residues 27–245 (MLPSTPHITA…PITTRSPSQE (219 aa)) are disordered. A compositionally biased stretch (low complexity) spans 73 to 88 (SLTPLETTELSSLETS). Composition is skewed to polar residues over residues 89 to 111 (AGASMSTPVPEPTASQEVSSKTS) and 145 to 154 (TAASTSISKG). Low complexity predominate over residues 155-166 (TSAPPTTVTTSS). The N-linked (GlcNAc...) asparagine glycan is linked to N167. A compositionally biased stretch (polar residues) spans 167 to 196 (NETSGPSVATTVSSKTSGPPVTTATGSLGP). Residues 205-241 (ATTATSSVESSSVARGTSVSSRKTSTTSTQDPITTRS) show a composition bias toward low complexity. A helical transmembrane segment spans residues 249–271 (MLLVPMLIALVVVLALVALLLLW). The required for interaction with EZR, MSN and RDX and for co-localization to microvilli stretch occupies residues 272–302 (RQRQKRRTGALTLSGGGKRNGVVDAWAGPAR). At 272–395 (RQRQKRRTGA…AKDEAAPQSL (124 aa)) the chain is on the cytoplasmic side. A Nuclear localization signal motif is present at residues 276-290 (KRRTGALTLSGGGKR). A phosphoserine mark is found at S285 and S328. Residues 303–395 (VPDEEATTTS…AKDEAAPQSL (93 aa)) are disordered. Residues 327–338 (GSGQRPTLTTFF) are compositionally biased toward polar residues. T333 is modified (phosphothreonine). 2 positions are modified to phosphoserine: S339 and S343. S347 is modified (phosphoserine; by PKC/PRKCQ). S371 is subject to Phosphoserine. The residue at position 378 (T378) is a Phosphothreonine. Residues 385 to 395 (QAKDEAAPQSL) are compositionally biased toward basic and acidic residues.

In terms of assembly, interacts with SIGLEC1. Interacts with isoform 2 of HIPK2. Interacts with CTNNB1. Interacts with RDX (via FERM domain). Interacts with EZR. Interacts with MSN. In terms of processing, phosphorylation at Ser-347 is regulated by chemokines, requires its association with ERM proteins (EZR, RDX and MSN) and is essential for its function in the regulation of T-cell trafficking to lymph nodes. Has a high content of sialic acid and O-linked carbohydrate structures. Post-translationally, cleavage by CTSG releases its extracellular domain and triggers its intramembrane proteolysis by gamma-secretase releasing the CD43 cytoplasmic tail chain (CD43-ct) which translocates to the nucleus. In terms of processing, sumoylated. Cell surface of thymocytes, T-lymphocytes, neutrophils, plasma cells and myelomas.

It localises to the membrane. Its subcellular location is the cell projection. It is found in the microvillus. The protein localises to the uropodium. The protein resides in the nucleus. It localises to the PML body. Predominant cell surface sialoprotein of leukocytes which regulates multiple T-cell functions, including T-cell activation, proliferation, differentiation, trafficking and migration. Positively regulates T-cell trafficking to lymph-nodes via its association with ERM proteins (EZR, RDX and MSN). Negatively regulates Th2 cell differentiation and predisposes the differentiation of T-cells towards a Th1 lineage commitment. Promotes the expression of IFN-gamma by T-cells during T-cell receptor (TCR) activation of naive cells and induces the expression of IFN-gamma by CD4(+) T-cells and to a lesser extent by CD8(+) T-cells. Plays a role in preparing T-cells for cytokine sensing and differentiation into effector cells by inducing the expression of cytokine receptors IFNGR and IL4R, promoting IFNGR and IL4R signaling and by mediating the clustering of IFNGR with TCR. Acts as a major E-selectin ligand responsible for Th17 cell rolling on activated vasculature and recruitment during inflammation. Mediates Th17 cells, but not Th1 cells, adhesion to E-selectin. Acts as a T-cell counter-receptor for SIGLEC1. Its function is as follows. Protects cells from apoptotic signals, promoting cell survival. The sequence is that of Leukosialin (Spn) from Mus musculus (Mouse).